Reading from the N-terminus, the 1088-residue chain is Protein argonaute 18 (1088 aa).

Residues 1–220 (MASRGGGQHQ…QPPPDLPQAP (220 aa)) are disordered. Gly residues-rich tracts occupy residues 20–30 (GGYGRGGGGGR), 51–86 (YPGG…GQGR), 95–127 (GRGY…GGYH), 135–148 (GRGG…GGGY), 161–182 (ARGG…YGRG), and 191–206 (GRGG…GGGS). A compositionally biased stretch (pro residues) spans 211–220 (QPPPDLPQAP). Residues 477 to 574 (TVGYFLNNYG…LPMELCNIVP (98 aa)) form the PAZ domain. The Piwi domain occupies 747-1056 (LLLVVMTDDK…LAFRARFYLT (310 aa)).

The protein belongs to the argonaute family. Ago subfamily.

Functionally, probably involved in the RNA silencing pathway. May bind to short RNAs such as microRNAs (miRNAs) or short interfering RNAs (siRNAs), and represses the translation of mRNAs which are complementary to them. This is Protein argonaute 18 (AGO18) from Oryza sativa subsp. japonica (Rice).